Reading from the N-terminus, the 405-residue chain is Probable tRNA sulfurtransferase (405 aa).

Residues 60–165 (EPVNDRLKVV…QDGAYISNQL (106 aa)) form the THUMP domain. ATP is bound by residues 183 to 184 (ML), 208 to 209 (HF), Arg-265, Gly-287, and Gln-296.

It belongs to the ThiI family.

The protein resides in the cytoplasm. It catalyses the reaction [ThiI sulfur-carrier protein]-S-sulfanyl-L-cysteine + a uridine in tRNA + 2 reduced [2Fe-2S]-[ferredoxin] + ATP + H(+) = [ThiI sulfur-carrier protein]-L-cysteine + a 4-thiouridine in tRNA + 2 oxidized [2Fe-2S]-[ferredoxin] + AMP + diphosphate. It carries out the reaction [ThiS sulfur-carrier protein]-C-terminal Gly-Gly-AMP + S-sulfanyl-L-cysteinyl-[cysteine desulfurase] + AH2 = [ThiS sulfur-carrier protein]-C-terminal-Gly-aminoethanethioate + L-cysteinyl-[cysteine desulfurase] + A + AMP + 2 H(+). Its pathway is cofactor biosynthesis; thiamine diphosphate biosynthesis. Its function is as follows. Catalyzes the ATP-dependent transfer of a sulfur to tRNA to produce 4-thiouridine in position 8 of tRNAs, which functions as a near-UV photosensor. Also catalyzes the transfer of sulfur to the sulfur carrier protein ThiS, forming ThiS-thiocarboxylate. This is a step in the synthesis of thiazole, in the thiamine biosynthesis pathway. The sulfur is donated as persulfide by IscS. The chain is Probable tRNA sulfurtransferase from Lactobacillus delbrueckii subsp. bulgaricus (strain ATCC BAA-365 / Lb-18).